The chain runs to 519 residues: Serine/threonine-protein kinase RIO3 (519 aa).

Residues serine 8 and serine 112 each carry the phosphoserine modification. The tract at residues 121–159 (PYEDSDSSEDEVDWQDTRDDPYRPAKPVPTPKKGFIGKG) is disordered. Residue tyrosine 122 is modified to Phosphotyrosine. The segment covering 124–134 (DSDSSEDEVDW) has biased composition (acidic residues). Phosphoserine occurs at positions 125, 127, and 128. The region spanning 251-519 (ETITGCISTG…DGDPPLLYDE (269 aa)) is the Protein kinase domain. Residues 257–265 (ISTGKESVV) and lysine 290 contribute to the ATP site. Aspartate 406 serves as the catalytic Proton acceptor.

Belongs to the protein kinase superfamily. RIO-type Ser/Thr kinase family. Interacts with CASP10. Interacts with IRF3; RIOK3 probably mediates the interaction of TBK1 with IRF3. Associated with 40S pre-ribosomal particles. Mg(2+) serves as cofactor. Autophosphorylated (in vitro). As to expression, widely expressed.

Its subcellular location is the cytoplasm. The enzyme catalyses L-seryl-[protein] + ATP = O-phospho-L-seryl-[protein] + ADP + H(+). The catalysed reaction is L-threonyl-[protein] + ATP = O-phospho-L-threonyl-[protein] + ADP + H(+). Its function is as follows. Involved in regulation of type I interferon (IFN)-dependent immune response which plays a critical role in the innate immune response against DNA and RNA viruses. May act as an adapter protein essential for the recruitment of TBK1 to IRF3. Phosphorylates IFIH1 on 'Ser-828' interfering with IFIH1 filament assembly on long dsRNA and resulting in attenuated IFIH1-signaling. Can inhibit CASP10 isoform 7-mediated activation of the NF-kappaB signaling pathway. May play a role in the biogenesis of the 40S ribosomal subunit. Involved in the processing of 21S pre-rRNA to the mature 18S rRNA. The chain is Serine/threonine-protein kinase RIO3 (RIOK3) from Homo sapiens (Human).